A 55-amino-acid chain; its full sequence is Large ribosomal subunit protein bL32c (55 aa).

Belongs to the bacterial ribosomal protein bL32 family.

The protein resides in the plastid. It is found in the chloroplast. This Nicotiana sylvestris (Wood tobacco) protein is Large ribosomal subunit protein bL32c.